Consider the following 397-residue polypeptide: 3-hydroxybenzoate 6-hydroxylase (397 aa).

This sequence belongs to the 3-hydroxybenzoate 6-hydroxylase family. Monomer. FAD is required as a cofactor.

The enzyme catalyses 3-hydroxybenzoate + NADH + O2 + H(+) = 2,5-dihydroxybenzoate + NAD(+) + H2O. With respect to regulation, inhibited by copper, mercury and iron ions. Functionally, catalyzes the NAD- or NADP-dependent conversion of 3-hydroxybenzoate to gentisate. NAD and NADP function equally well. The chain is 3-hydroxybenzoate 6-hydroxylase (mhbM) from Klebsiella oxytoca.